Consider the following 52-residue polypeptide: Large ribosomal subunit protein eL40 (52 aa).

Residues Cys-20, Cys-23, Cys-34, and Cys-39 each coordinate Zn(2+).

The protein belongs to the eukaryotic ribosomal protein eL40 family. In terms of assembly, component of the large ribosomal subunit. Mature ribosomes consist of a small (40S) and a large (60S) subunit. The 40S subunit contains about 32 different proteins and 1 molecule of RNA (18S). The 60S subunit contains 45 different proteins and 3 molecules of RNA (25S, 5.8S and 5S). The cofactor is Zn(2+).

The protein resides in the cytoplasm. Component of the ribosome, a large ribonucleoprotein complex responsible for the synthesis of proteins in the cell. The small ribosomal subunit (SSU) binds messenger RNAs (mRNAs) and translates the encoded message by selecting cognate aminoacyl-transfer RNA (tRNA) molecules. The large subunit (LSU) contains the ribosomal catalytic site termed the peptidyl transferase center (PTC), which catalyzes the formation of peptide bonds, thereby polymerizing the amino acids delivered by tRNAs into a polypeptide chain. The nascent polypeptides leave the ribosome through a tunnel in the LSU and interact with protein factors that function in enzymatic processing, targeting, and the membrane insertion of nascent chains at the exit of the ribosomal tunnel. The protein is Large ribosomal subunit protein eL40 of Candida albicans (strain SC5314 / ATCC MYA-2876) (Yeast).